Reading from the N-terminus, the 81-residue chain is Pyruvate synthase subunit PorD (81 aa).

The interval methionine 1–glycine 20 is disordered. 2 consecutive 4Fe-4S ferredoxin-type domains span residues phenylalanine 25 to glutamate 54 and lysine 51 to glutamate 80. Residues cysteine 34, cysteine 37, cysteine 40, cysteine 44, cysteine 60, cysteine 63, cysteine 66, and cysteine 70 each contribute to the [4Fe-4S] cluster site.

As to quaternary structure, heterotetramer of one alpha, one beta, one delta and one gamma chain. It depends on [4Fe-4S] cluster as a cofactor.

This chain is Pyruvate synthase subunit PorD (porD), found in Methanothermobacter marburgensis (strain ATCC BAA-927 / DSM 2133 / JCM 14651 / NBRC 100331 / OCM 82 / Marburg) (Methanobacterium thermoautotrophicum).